The chain runs to 467 residues: Methylenetetrahydrofolate--tRNA-(uracil-5-)-methyltransferase TrmFO (467 aa).

Residue 10–15 coordinates FAD; it reads GAGLAG.

It belongs to the MnmG family. TrmFO subfamily. The cofactor is FAD.

It localises to the cytoplasm. It catalyses the reaction uridine(54) in tRNA + (6R)-5,10-methylene-5,6,7,8-tetrahydrofolate + NADH + H(+) = 5-methyluridine(54) in tRNA + (6S)-5,6,7,8-tetrahydrofolate + NAD(+). The catalysed reaction is uridine(54) in tRNA + (6R)-5,10-methylene-5,6,7,8-tetrahydrofolate + NADPH + H(+) = 5-methyluridine(54) in tRNA + (6S)-5,6,7,8-tetrahydrofolate + NADP(+). Its function is as follows. Catalyzes the folate-dependent formation of 5-methyl-uridine at position 54 (M-5-U54) in all tRNAs. The sequence is that of Methylenetetrahydrofolate--tRNA-(uracil-5-)-methyltransferase TrmFO from Prochlorococcus marinus (strain MIT 9515).